We begin with the raw amino-acid sequence, 213 residues long: Proteasome subunit beta 1 (213 aa).

A propeptide spans 1–18 (MVFIAVFNGVFAMSSLPG) (removed in mature form; by autocatalysis). The Nucleophile role is filled by threonine 19.

Belongs to the peptidase T1B family. In terms of assembly, the 20S proteasome core is composed of 14 alpha and 14 beta subunits that assemble into four stacked heptameric rings, resulting in a barrel-shaped structure. The two inner rings, each composed of seven catalytic beta subunits, are sandwiched by two outer rings, each composed of seven alpha subunits. The catalytic chamber with the active sites is on the inside of the barrel. Has a gated structure, the ends of the cylinder being occluded by the N-termini of the alpha-subunits. Is capped at one or both ends by the proteasome regulatory ATPase, PAN.

The protein resides in the cytoplasm. The catalysed reaction is Cleavage of peptide bonds with very broad specificity.. Its activity is regulated as follows. The formation of the proteasomal ATPase PAN-20S proteasome complex, via the docking of the C-termini of PAN into the intersubunit pockets in the alpha-rings, triggers opening of the gate for substrate entry. Interconversion between the open-gate and close-gate conformations leads to a dynamic regulation of the 20S proteasome proteolysis activity. Functionally, component of the proteasome core, a large protease complex with broad specificity involved in protein degradation. This chain is Proteasome subunit beta 1, found in Staphylothermus marinus (strain ATCC 43588 / DSM 3639 / JCM 9404 / F1).